The primary structure comprises 255 residues: MAKLMNKLVDSFEHDEIPDVGCVRAVLAELVLTFLFVFTGVSAAMAAGSDGKPGDAMPMATLAAVAIAHALAAGVLVTAGFHVSGGHLNPAVTVGLMVRGHITKLRAVLYVAAQLLASSAACVLLRFLSGGMVTPVHALGRGISPMQGLVMEVILTFSLLFVTYAMILDPRSQVRAIGPLLTGLIVGANSLAGGNFTGASMNPARSFGPALATGDWTNHWVYWIGPLLGGPLAGFVYESLFLVQKMHEPLLNGEV.

2 consecutive transmembrane segments (helical) span residues 25–45 (AVLA…SAAM) and 61–81 (TLAA…TAGF). Positions 89 to 91 (NPA) match the NPA 1 motif. 3 helical membrane passes run 108–128 (VLYV…LRFL), 148–168 (GLVM…AMIL), and 176–196 (AIGP…GGNF). An NPA 2 motif is present at residues 202 to 204 (NPA). A helical membrane pass occupies residues 223 to 243 (WIGPLLGGPLAGFVYESLFLV).

It belongs to the MIP/aquaporin (TC 1.A.8) family. TIP (TC 1.A.8.10) subfamily.

The protein resides in the vacuole membrane. In terms of biological role, aquaporins facilitate the transport of water and small neutral solutes across cell membranes. This is Aquaporin TIP4-1 (TIP4-1) from Zea mays (Maize).